Consider the following 390-residue polypeptide: Precorrin-6Y C(5,15)-methyltransferase [decarboxylating] (390 aa).

The protein belongs to the precorrin methyltransferase family.

The enzyme catalyses precorrin-6B + 2 S-adenosyl-L-methionine = precorrin-8X + 2 S-adenosyl-L-homocysteine + CO2 + 3 H(+). The protein operates within cofactor biosynthesis; adenosylcobalamin biosynthesis; cob(II)yrinate a,c-diamide from precorrin-2 (aerobic route): step 7/10. In terms of biological role, catalyzes the methylation of both C-5 and C-15 in precorrin-6Y to form precorrin-8X. This chain is Precorrin-6Y C(5,15)-methyltransferase [decarboxylating] (cobL), found in Mycobacterium tuberculosis (strain CDC 1551 / Oshkosh).